Consider the following 261-residue polypeptide: Cytochrome c oxidase subunit 3 (261 aa).

The Mitochondrial matrix portion of the chain corresponds to 1-15 (MTHQTHAYHMVNPSP). The helical transmembrane segment at 16–34 (WPLTGALSALLMTSGLTMW) threads the bilayer. The Mitochondrial intermembrane segment spans residues 35–40 (FHFNST). Residues 41–66 (ILLMLGLTTNMLTMYQWWRDIIREST) traverse the membrane as a helical segment. Topologically, residues 67–72 (FQGHHT) are mitochondrial matrix. Residues 73–105 (PVVQKGLRYGMILFIISEVLFFTGFFWAFYHSS) form a helical membrane-spanning segment. Topologically, residues 106-128 (LAPTPELGGCWPPTGIHPLNPLE) are mitochondrial intermembrane. Residues 129-152 (VPLLNTSVLLASGVSITWAHHSLM) traverse the membrane as a helical segment. Topologically, residues 153 to 155 (EGH) are mitochondrial matrix. The chain crosses the membrane as a helical span at residues 156–183 (RNHMLQALFITIALGVYFTLLQASEYYE). At 184–190 (APFTISD) the chain is on the mitochondrial intermembrane side. The helical transmembrane segment at 191-223 (GVYGSTFFVATGFHGLHVIIGSTFLIVCFFRQL) threads the bilayer. Topologically, residues 224 to 232 (KFHFTSSHH) are mitochondrial matrix. A helical membrane pass occupies residues 233–256 (FGFEAAAWYWHFVDVVWLFLYVSI). The Mitochondrial intermembrane segment spans residues 257–261 (YWWGS).

This sequence belongs to the cytochrome c oxidase subunit 3 family. Component of the cytochrome c oxidase (complex IV, CIV), a multisubunit enzyme composed of 14 subunits. The complex is composed of a catalytic core of 3 subunits MT-CO1, MT-CO2 and MT-CO3, encoded in the mitochondrial DNA, and 11 supernumerary subunits COX4I, COX5A, COX5B, COX6A, COX6B, COX6C, COX7A, COX7B, COX7C, COX8 and NDUFA4, which are encoded in the nuclear genome. The complex exists as a monomer or a dimer and forms supercomplexes (SCs) in the inner mitochondrial membrane with NADH-ubiquinone oxidoreductase (complex I, CI) and ubiquinol-cytochrome c oxidoreductase (cytochrome b-c1 complex, complex III, CIII), resulting in different assemblies (supercomplex SCI(1)III(2)IV(1) and megacomplex MCI(2)III(2)IV(2)).

Its subcellular location is the mitochondrion inner membrane. The catalysed reaction is 4 Fe(II)-[cytochrome c] + O2 + 8 H(+)(in) = 4 Fe(III)-[cytochrome c] + 2 H2O + 4 H(+)(out). Its function is as follows. Component of the cytochrome c oxidase, the last enzyme in the mitochondrial electron transport chain which drives oxidative phosphorylation. The respiratory chain contains 3 multisubunit complexes succinate dehydrogenase (complex II, CII), ubiquinol-cytochrome c oxidoreductase (cytochrome b-c1 complex, complex III, CIII) and cytochrome c oxidase (complex IV, CIV), that cooperate to transfer electrons derived from NADH and succinate to molecular oxygen, creating an electrochemical gradient over the inner membrane that drives transmembrane transport and the ATP synthase. Cytochrome c oxidase is the component of the respiratory chain that catalyzes the reduction of oxygen to water. Electrons originating from reduced cytochrome c in the intermembrane space (IMS) are transferred via the dinuclear copper A center (CU(A)) of subunit 2 and heme A of subunit 1 to the active site in subunit 1, a binuclear center (BNC) formed by heme A3 and copper B (CU(B)). The BNC reduces molecular oxygen to 2 water molecules using 4 electrons from cytochrome c in the IMS and 4 protons from the mitochondrial matrix. The protein is Cytochrome c oxidase subunit 3 (MT-CO3) of Tragelaphus strepsiceros (Greater kudu).